A 516-amino-acid polypeptide reads, in one-letter code: uncharacterized protein (516 aa).

The protein to H.influenzae HI_0521.

This is an uncharacterized protein from Escherichia coli (strain K12).